The primary structure comprises 605 residues: Capsid scaffolding protein (605 aa).

Catalysis depends on charge relay system residues histidine 48, serine 116, and histidine 139. A disordered region spans residues 235–275; the sequence is ASDAPDLQKPDKALQSPPPASTDPDTMLSGNAGEGATACGG. Residues 281 to 300 form an interaction with pAP region; that stretch reads QDLISVPRNTFMTLLQTNLD. Disordered stretches follow at residues 403–432 and 489–588; these read DYVP…PGED and PHQS…KSVS. The Nuclear localization signal motif lies at 410–416; that stretch reads RSNKRKR. Positions 568–579 are enriched in polar residues; it reads ASASGVAQSKEP. The interaction with major capsid protein stretch occupies residues 585–605; the sequence is KSVSAHLKSIFCEELLNKRVA.

The protein belongs to the herpesviridae capsid scaffolding protein family. In terms of assembly, homomultimer. Interacts with major capsid protein. Exists in a monomer-dimer equilibrium with the dimer being the active species. Post-translationally, capsid scaffolding protein is cleaved by assemblin after formation of the spherical procapsid. As a result, the capsid obtains its mature, icosahedral shape. Cleavages occur at two or more sites: release (R-site) and maturation (M-site).

The protein localises to the host cytoplasm. Its subcellular location is the host nucleus. The catalysed reaction is Cleaves -Ala-|-Ser- and -Ala-|-Ala- bonds in the scaffold protein.. Its function is as follows. Acts as a scaffold protein by binding major capsid protein in the cytoplasm, inducing the nuclear localization of both proteins. Multimerizes in the nucleus such as major capsid protein forms the icosahedral T=16 capsid. Autocatalytic cleavage releases the assembly protein, and subsequently abolishes interaction with major capsid protein. Cleavages products are evicted from the capsid before or during DNA packaging. Functionally, protease that plays an essential role in virion assembly within the nucleus. Catalyzes the cleavage of the assembly protein after formation of the spherical procapsid. By that cleavage, the capsid matures and gains its icosahedral shape. The cleavage sites seem to include -Ala-Ser-, -Ala-Ala-, as well as Ala-Thr bonds. Assemblin and cleavages products are evicted from the capsid before or during DNA packaging. In terms of biological role, plays a major role in capsid assembly. Acts as a scaffold protein by binding major capsid protein. Multimerizes in the nucleus such as major capsid protein forms the icosahedral T=16 capsid. Cleaved by assemblin after capsid completion. The cleavages products are evicted from the capsid before or during DNA packaging. In Epstein-Barr virus (strain AG876) (HHV-4), this protein is Capsid scaffolding protein.